Here is a 357-residue protein sequence, read N- to C-terminus: 3-isopropylmalate dehydrogenase (357 aa).

76–89 (GPQWDTIDPALRPE) contributes to the NAD(+) binding site. Residues R96, R106, R134, and D224 each contribute to the substrate site. Residues D224, D248, and D252 each contribute to the Mg(2+) site. Position 282–294 (282–294 (GSAPDIAGQGVAN)) interacts with NAD(+).

This sequence belongs to the isocitrate and isopropylmalate dehydrogenases family. LeuB type 1 subfamily. Homodimer. Requires Mg(2+) as cofactor. Mn(2+) is required as a cofactor.

It is found in the cytoplasm. The catalysed reaction is (2R,3S)-3-isopropylmalate + NAD(+) = 4-methyl-2-oxopentanoate + CO2 + NADH. The protein operates within amino-acid biosynthesis; L-leucine biosynthesis; L-leucine from 3-methyl-2-oxobutanoate: step 3/4. Its function is as follows. Catalyzes the oxidation of 3-carboxy-2-hydroxy-4-methylpentanoate (3-isopropylmalate) to 3-carboxy-4-methyl-2-oxopentanoate. The product decarboxylates to 4-methyl-2 oxopentanoate. This chain is 3-isopropylmalate dehydrogenase, found in Xylella fastidiosa (strain Temecula1 / ATCC 700964).